We begin with the raw amino-acid sequence, 373 residues long: Forkhead box protein F1 (373 aa).

Positions 1–51 (MTAEIQQPPSQPPAQSSPMSAATDKHGGQPSVMESANCATKTKKTNAGIRR) are disordered. Residues 13–22 (PAQSSPMSAA) are compositionally biased toward low complexity. Residues 54 to 148 (KPPYSYIALI…EEGSFRRRPR (95 aa)) constitute a DNA-binding region (fork-head). Disordered stretches follow at residues 236–255 (GSSG…LGGG) and 283–306 (QPLS…SLDQ). Low complexity predominate over residues 286-306 (SPCNSAANPLSSSLSSHSLDQ).

The protein localises to the nucleus. Probable transcription factor. Required for smooth muscle (visceral mesoderm) differentiation during gut development. Also required for normal proliferation of the lateral plate mesoderm. Acts as a downstream mediator of bmp4-signaling. This chain is Forkhead box protein F1, found in Xenopus tropicalis (Western clawed frog).